Consider the following 271-residue polypeptide: Dermonecrotic toxin SpeSicTox-betaIF1 (271 aa).

Residue H3 is part of the active site. Residues E23 and D25 each coordinate Mg(2+). The active-site Nucleophile is the H39. 2 disulfide bridges follow: C43–C49 and C45–C188. D83 serves as a coordination point for Mg(2+).

This sequence belongs to the arthropod phospholipase D family. Class II subfamily. Mg(2+) serves as cofactor. Expressed by the venom gland.

It localises to the secreted. The catalysed reaction is an N-(acyl)-sphingosylphosphocholine = an N-(acyl)-sphingosyl-1,3-cyclic phosphate + choline. It catalyses the reaction an N-(acyl)-sphingosylphosphoethanolamine = an N-(acyl)-sphingosyl-1,3-cyclic phosphate + ethanolamine. It carries out the reaction a 1-acyl-sn-glycero-3-phosphocholine = a 1-acyl-sn-glycero-2,3-cyclic phosphate + choline. The enzyme catalyses a 1-acyl-sn-glycero-3-phosphoethanolamine = a 1-acyl-sn-glycero-2,3-cyclic phosphate + ethanolamine. Dermonecrotic toxins cleave the phosphodiester linkage between the phosphate and headgroup of certain phospholipids (sphingolipid and lysolipid substrates), forming an alcohol (often choline) and a cyclic phosphate. This toxin acts on sphingomyelin (SM). It may also act on ceramide phosphoethanolamine (CPE), lysophosphatidylcholine (LPC) and lysophosphatidylethanolamine (LPE), but not on lysophosphatidylserine (LPS), and lysophosphatidylglycerol (LPG). It acts by transphosphatidylation, releasing exclusively cyclic phosphate products as second products. Induces dermonecrosis, hemolysis, increased vascular permeability, edema, inflammatory response, and platelet aggregation. The polypeptide is Dermonecrotic toxin SpeSicTox-betaIF1 (Sicarius peruensis (Six-eyed sand spider)).